Here is a 682-residue protein sequence, read N- to C-terminus: MSEPRKILVTSALPYANGSIHLGHMLEYIQTDMWVRFQKHRGNQCIYVCADDAHGSAIMLRAEKEGITPEQLIANVKAEHSADFADFLVEFDNFHSTHSDENRELSSMIYKRLRDAGHIATRSVTQYFDPEKKMFLADRFIKGTCPKCAAEDQYGDNCEKCGATYAPTDLKDPKSAISGATPVLKDSKHFFFDLPAFDAMLKSWTRSGTLQDAVANKIAEWLDSGLQQWDISRDAPYFGFEIPDEPGKYFYVWLDAPIGYMASFKNLCARRPDLDFDAYWGKGATTELYHFIGKDIVNFHALFWPAMLEGAELRTPTGINVHGYLTVNGQKMSKSRGTFIKARTYLDHLPPEYLRYYYASKLGRGVDDLDLNLEDFVQKVNSDLIGKVVNIASRCAGFIHKGNAGVMVEANAAPELTDAFLTAAPSIADAYEARDFARAMRETMALADRANAYIAEKAPWALAKQEGRQDEVQAVCALGINLFRQLVIFLKPVLPNLAADAEKFLNVEPLTWEDHKTLLANHQLNPFSALMTRIDPVKVEAMATASKEDLTATDSSADTAPAGNGELAKDPLSAEIDFDAFAAIDLRVALILKAEHVEGADKLLRLTLDIGDEQRNVFSGIKSAYPNPSELEGRLTMMIANLKPRKMRFGISQGMVMAAGPGGEEIYLLSPDSGARPGQRIK.

The 'HIGH' region signature appears at 14–24 (PYANGSIHLGH). Residues cysteine 145, cysteine 148, cysteine 158, and cysteine 161 each contribute to the Zn(2+) site. A 'KMSKS' region motif is present at residues 331 to 335 (KMSKS). Lysine 334 contacts ATP. A tRNA-binding domain is found at 580 to 682 (AFAAIDLRVA…SGARPGQRIK (103 aa)).

The protein belongs to the class-I aminoacyl-tRNA synthetase family. MetG type 1 subfamily. Homodimer. Requires Zn(2+) as cofactor.

It is found in the cytoplasm. The catalysed reaction is tRNA(Met) + L-methionine + ATP = L-methionyl-tRNA(Met) + AMP + diphosphate. Its function is as follows. Is required not only for elongation of protein synthesis but also for the initiation of all mRNA translation through initiator tRNA(fMet) aminoacylation. This Pseudomonas syringae pv. syringae (strain B728a) protein is Methionine--tRNA ligase.